The following is a 100-amino-acid chain: Urease subunit gamma (100 aa).

It belongs to the urease gamma subunit family. In terms of assembly, heterotrimer of UreA (gamma), UreB (beta) and UreC (alpha) subunits. Three heterotrimers associate to form the active enzyme.

The protein localises to the cytoplasm. It carries out the reaction urea + 2 H2O + H(+) = hydrogencarbonate + 2 NH4(+). The protein operates within nitrogen metabolism; urea degradation; CO(2) and NH(3) from urea (urease route): step 1/1. This chain is Urease subunit gamma, found in Parasynechococcus marenigrum (strain WH8102).